A 406-amino-acid chain; its full sequence is Zinc finger protein 793 (406 aa).

A KRAB domain is found at V8 to W79. C2H2-type zinc fingers lie at residues H227–H249, Y255–H277, F283–H305, F311–H333, Y339–H361, and Y367–H389.

It belongs to the krueppel C2H2-type zinc-finger protein family.

It localises to the nucleus. Its function is as follows. May be involved in transcriptional regulation. This Homo sapiens (Human) protein is Zinc finger protein 793 (ZNF793).